Consider the following 206-residue polypeptide: Large ribosomal subunit protein uL4 (206 aa).

A disordered region spans residues 63-93 (MYKQKGTGRARHHSARAPQFRGGGKAHGPVV). Basic residues predominate over residues 64 to 77 (YKQKGTGRARHHSA).

This sequence belongs to the universal ribosomal protein uL4 family. Part of the 50S ribosomal subunit.

Its function is as follows. One of the primary rRNA binding proteins, this protein initially binds near the 5'-end of the 23S rRNA. It is important during the early stages of 50S assembly. It makes multiple contacts with different domains of the 23S rRNA in the assembled 50S subunit and ribosome. In terms of biological role, forms part of the polypeptide exit tunnel. The sequence is that of Large ribosomal subunit protein uL4 from Rhizobium meliloti (strain 1021) (Ensifer meliloti).